The chain runs to 145 residues: Antiholin-like protein LrgA (145 aa).

Helical transmembrane passes span 10–30 (PAHF…SKII), 33–53 (FMPI…VLLC), 72–92 (NIGL…GVIS), and 96–116 (FLII…TGYV).

Belongs to the CidA/LrgA family. LrgA subfamily.

The protein localises to the cell membrane. Functionally, inhibits the expression or activity of extracellular murein hydrolases by interacting, possibly with LrgB, with the holin-like proteins CidA and/or CidB. The LrgAB and CidAB proteins may affect the proton motive force of the membrane. May be involved in programmed cell death (PCD), possibly triggering PCD in response to antibiotics and environmental stresses. The polypeptide is Antiholin-like protein LrgA (Staphylococcus aureus (strain JH1)).